Consider the following 580-residue polypeptide: Glypican-3 (580 aa).

The first 24 residues, 1–24, serve as a signal peptide directing secretion; the sequence is MAGTVRTACLVVAMLLSLDFPGQA. Gln-25 carries the post-translational modification Pyrrolidone carboxylic acid. 7 disulfides stabilise this stretch: Cys-35–Cys-72, Cys-65–Cys-262, Cys-73–Cys-265, Cys-197–Cys-349, Cys-252–Cys-285, Cys-274–Cys-422, and Cys-278–Cys-410. N-linked (GlcNAc...) asparagine glycans are attached at residues Asn-124 and Asn-241. Ser-352 bears the Phosphoserine mark. An N-linked (GlcNAc...) asparagine glycan is attached at Asn-418. Residues Ser-495 and Ser-509 are each glycosylated (O-linked (Xyl...) (glycosaminoglycan) serine). The GPI-anchor amidated asparagine moiety is linked to residue Asn-554. Residues 555-580 constitute a propeptide, removed in mature form; it reads LGNVHSPLKLLTSMAISVVCFFFLVH.

It belongs to the glypican family. Heterodimer; disulfide-linked. Cleavage by a furin-like convertase results in production of alpha and beta chains which form a disulfide-linked heterodimer. Interacts with DPP4. Interacts with FGF2. Interacts with WNT5A. Also interacts with WNT3A and WNT7B. Interacts with hedgehog protein SHH; the heparan sulfate chains are not required for the interaction. Also interacts with hedgehog protein IHH. Interacts with CD81. Interacts with Wnt receptors FZD4, FZD7 and FZD8; the heparan sulfate chains are required for the interaction. In terms of processing, O-glycosylated; contains heparan sulfate and/or chondroitin sulfate. Post-translationally, cleaved intracellularly by a furin-like convertase to generate 2 subunits, alpha and beta, which remain associated through disulfide bonds and are associated with the cell surface via the GPI-anchor. This processing is essential for its role in inhibition of hedgehog signaling. A second proteolytic event may result in cleavage of the protein on the cell surface, separating it from the GPI-anchor and leading to its shedding from the cell surface.

Its subcellular location is the cell membrane. Cell surface proteoglycan. Negatively regulates the hedgehog signaling pathway when attached via the GPI-anchor to the cell surface by competing with the hedgehog receptor PTC1 for binding to hedgehog proteins. Binding to the hedgehog protein SHH triggers internalization of the complex by endocytosis and its subsequent lysosomal degradation. Positively regulates the canonical Wnt signaling pathway by binding to the Wnt receptor Frizzled and stimulating the binding of the Frizzled receptor to Wnt ligands. Positively regulates the non-canonical Wnt signaling pathway. Binds to CD81 which decreases the availability of free CD81 for binding to the transcriptional repressor HHEX, resulting in nuclear translocation of HHEX and transcriptional repression. Inhibits the dipeptidyl peptidase activity of DPP4. Plays a role in limb patterning and skeletal development by controlling the cellular response to BMP4. Modulates the effects of growth factors BMP2, BMP7 and FGF7 on renal branching morphogenesis. Required for coronary vascular development. Plays a role in regulating cell movements during gastrulation. This is Glypican-3 (GPC3) from Pan troglodytes (Chimpanzee).